The sequence spans 778 residues: Tastin (778 aa).

Residues 1–11 (MTTRQATKDPL) are compositionally biased toward basic and acidic residues. Residues 1 to 115 (MTTRQATKDP…PGPPAQTEAP (115 aa)) are disordered. A phosphoserine mark is found at Ser-16, Ser-98, and Ser-170. Residues 212–244 (ISPSGPSFHPSTRPSFQELRRETAGSSRTSVSQ) form a disordered region. Positions 235-244 (AGSSRTSVSQ) are enriched in polar residues. Phosphoserine is present on residues Ser-324, Ser-334, Ser-344, and Ser-362. Phosphothreonine is present on Thr-363. Residue Ser-376 is modified to Phosphoserine. Disordered regions lie at residues 406–425 (EGSG…NRTP), 508–587 (ECGE…AEPR), and 600–641 (PESS…RVEL). Residues 513–523 (QPCPPAEPGPP) are compositionally biased toward pro residues. 4 tandem repeats follow at residues 516–548 (PPAE…PEPY), 549–581 (PPAE…PEPC), 582–614 (PPAE…PEPC), and 615–647 (PPAE…SEPC). Residues 516 to 647 (PPAEPGPPEA…RVELGASEPC (132 aa)) form a 4 X 33 AA approximate tandem repeats region. Basic and acidic residues predominate over residues 560 to 574 (CRSEPEIPESSRQEQ). Positions 612-622 (EPCPPAEPGPL) are enriched in pro residues.

Directly binds bystin, and indirectly trophinin. In terms of tissue distribution, strong expression at implantation sites. Was exclusively localized to the apical side of the syncytiotrophoblast. Also found in macrophages.

It is found in the cytoplasm. Could be involved with bystin and trophinin in a cell adhesion molecule complex that mediates an initial attachment of the blastocyst to uterine epithelial cells at the time of the embryo implantation. The chain is Tastin (TROAP) from Homo sapiens (Human).